We begin with the raw amino-acid sequence, 230 residues long: Endonuclease NucS (230 aa).

The protein belongs to the NucS endonuclease family.

It is found in the cytoplasm. Its function is as follows. Cleaves both 3' and 5' ssDNA extremities of branched DNA structures. The sequence is that of Endonuclease NucS from Corynebacterium glutamicum (strain R).